The chain runs to 160 residues: Cytochrome b6-f complex subunit 4 (160 aa).

The next 3 helical transmembrane spans lie at 36–56 (LLYI…GLAV), 95–115 (LLGI…PFIE), and 131–151 (AFFL…CLPI).

This sequence belongs to the cytochrome b family. PetD subfamily. As to quaternary structure, the 4 large subunits of the cytochrome b6-f complex are cytochrome b6, subunit IV (17 kDa polypeptide, PetD), cytochrome f and the Rieske protein, while the 4 small subunits are PetG, PetL, PetM and PetN. The complex functions as a dimer.

It localises to the cellular thylakoid membrane. Its function is as follows. Component of the cytochrome b6-f complex, which mediates electron transfer between photosystem II (PSII) and photosystem I (PSI), cyclic electron flow around PSI, and state transitions. This is Cytochrome b6-f complex subunit 4 from Prochlorococcus marinus (strain SARG / CCMP1375 / SS120).